We begin with the raw amino-acid sequence, 264 residues long: Thymidylate synthase 2 (264 aa).

Arginine 21 is a binding site for dUMP. Histidine 51 is a (6R)-5,10-methylene-5,6,7,8-tetrahydrofolate binding site. A dUMP-binding site is contributed by 126–127; it reads RR. Cysteine 146 serves as the catalytic Nucleophile. DUMP-binding positions include 166 to 169, asparagine 177, and 207 to 209; these read RSAD and HIY. Aspartate 169 provides a ligand contact to (6R)-5,10-methylene-5,6,7,8-tetrahydrofolate. Position 263 (serine 263) interacts with (6R)-5,10-methylene-5,6,7,8-tetrahydrofolate.

This sequence belongs to the thymidylate synthase family. Bacterial-type ThyA subfamily. In terms of assembly, homodimer.

It localises to the cytoplasm. It catalyses the reaction dUMP + (6R)-5,10-methylene-5,6,7,8-tetrahydrofolate = 7,8-dihydrofolate + dTMP. The protein operates within pyrimidine metabolism; dTTP biosynthesis. Its function is as follows. Catalyzes the reductive methylation of 2'-deoxyuridine-5'-monophosphate (dUMP) to 2'-deoxythymidine-5'-monophosphate (dTMP) while utilizing 5,10-methylenetetrahydrofolate (mTHF) as the methyl donor and reductant in the reaction, yielding dihydrofolate (DHF) as a by-product. This enzymatic reaction provides an intracellular de novo source of dTMP, an essential precursor for DNA biosynthesis. The chain is Thymidylate synthase 2 from Bacillus subtilis (strain 168).